A 350-amino-acid polypeptide reads, in one-letter code: tRNA uridine(34) hydroxylase (350 aa).

In terms of domain architecture, Rhodanese spans 128–221 (EETDYVMIDT…YMKEYPNDQF (94 aa)). Catalysis depends on Cys-181, which acts as the Cysteine persulfide intermediate.

Belongs to the TrhO family.

It carries out the reaction uridine(34) in tRNA + AH2 + O2 = 5-hydroxyuridine(34) in tRNA + A + H2O. Functionally, catalyzes oxygen-dependent 5-hydroxyuridine (ho5U) modification at position 34 in tRNAs. The polypeptide is tRNA uridine(34) hydroxylase (Bdellovibrio bacteriovorus (strain ATCC 15356 / DSM 50701 / NCIMB 9529 / HD100)).